The sequence spans 102 residues: Small ribosomal subunit protein uS10 (102 aa).

Belongs to the universal ribosomal protein uS10 family. As to quaternary structure, part of the 30S ribosomal subunit.

Its function is as follows. Involved in the binding of tRNA to the ribosomes. The polypeptide is Small ribosomal subunit protein uS10 (Thermotoga maritima (strain ATCC 43589 / DSM 3109 / JCM 10099 / NBRC 100826 / MSB8)).